Reading from the N-terminus, the 181-residue chain is ATP synthase subunit delta (181 aa).

The protein belongs to the ATPase delta chain family. In terms of assembly, F-type ATPases have 2 components, F(1) - the catalytic core - and F(0) - the membrane proton channel. F(1) has five subunits: alpha(3), beta(3), gamma(1), delta(1), epsilon(1). F(0) has three main subunits: a(1), b(2) and c(10-14). The alpha and beta chains form an alternating ring which encloses part of the gamma chain. F(1) is attached to F(0) by a central stalk formed by the gamma and epsilon chains, while a peripheral stalk is formed by the delta and b chains.

The protein resides in the cell inner membrane. In terms of biological role, f(1)F(0) ATP synthase produces ATP from ADP in the presence of a proton or sodium gradient. F-type ATPases consist of two structural domains, F(1) containing the extramembraneous catalytic core and F(0) containing the membrane proton channel, linked together by a central stalk and a peripheral stalk. During catalysis, ATP synthesis in the catalytic domain of F(1) is coupled via a rotary mechanism of the central stalk subunits to proton translocation. This protein is part of the stalk that links CF(0) to CF(1). It either transmits conformational changes from CF(0) to CF(1) or is implicated in proton conduction. The protein is ATP synthase subunit delta of Chlorobaculum tepidum (strain ATCC 49652 / DSM 12025 / NBRC 103806 / TLS) (Chlorobium tepidum).